Consider the following 329-residue polypeptide: Cathepsin K (329 aa).

Residues M1–A15 form the signal peptide. A propeptide spans L16–R114 (activation peptide). N103 carries an N-linked (GlcNAc...) asparagine glycan. 2 disulfides stabilise this stretch: C136–C177 and C170–C210. C139 is a catalytic residue. An N-linked (GlcNAc...) asparagine glycan is attached at N213. C269 and C318 form a disulfide bridge. Active-site residues include H276 and N296.

The protein belongs to the peptidase C1 family. Predominantly expressed in bones. Expressed in thyroid epithelial cells.

The protein localises to the lysosome. It is found in the secreted. Its subcellular location is the apical cell membrane. It catalyses the reaction Broad proteolytic activity. With small-molecule substrates and inhibitors, the major determinant of specificity is P2, which is preferably Leu, Met &gt; Phe, and not Arg.. Functionally, thiol protease involved in osteoclastic bone resorption. Displays potent endoprotease activity against fibrinogen at acid pH. May play an important role in extracellular matrix degradation. Involved in the release of thyroid hormone thyroxine (T4) by limited proteolysis of TG/thyroglobulin in the thyroid follicle lumen. In Mus musculus (Mouse), this protein is Cathepsin K (Ctsk).